The sequence spans 245 residues: tRNA (guanine-N(1)-)-methyltransferase (245 aa).

S-adenosyl-L-methionine contacts are provided by residues Gly-111 and 131 to 136; that span reads MGDYVL.

This sequence belongs to the RNA methyltransferase TrmD family. As to quaternary structure, homodimer.

The protein localises to the cytoplasm. The enzyme catalyses guanosine(37) in tRNA + S-adenosyl-L-methionine = N(1)-methylguanosine(37) in tRNA + S-adenosyl-L-homocysteine + H(+). In terms of biological role, specifically methylates guanosine-37 in various tRNAs. The chain is tRNA (guanine-N(1)-)-methyltransferase from Staphylococcus aureus (strain Mu3 / ATCC 700698).